Here is a 377-residue protein sequence, read N- to C-terminus: Rhodopsin, long-wavelength (377 aa).

The Extracellular portion of the chain corresponds to 1 to 51 (MIAVSGPSYEAFSYGGQARFNNQTVVDKVPPDMLHLIDANWYQYPPLNPMW). Residue Asn-22 is glycosylated (N-linked (GlcNAc...) asparagine). A helical transmembrane segment spans residues 52 to 76 (HGILGFVIGMLGFVSAMGNGMVVYI). Residues 77-88 (FLSTKSLRTPSN) lie on the Cytoplasmic side of the membrane. Residues 89–113 (LFVINLAISNFLMMFCMSPPMVINC) form a helical membrane-spanning segment. The Extracellular portion of the chain corresponds to 114 to 128 (YYETWVLGPLFCQIY). The cysteines at positions 125 and 202 are disulfide-linked. A helical transmembrane segment spans residues 129–148 (AMLGSLFGCGSIWTMTMIAF). Residues 149–167 (DRYNVIVKGLSGKPLSING) lie on the Cytoplasmic side of the membrane. The helical transmembrane segment at 168-191 (ALIRIIAIWLFSLGWTIAPMFGWN) threads the bilayer. The Extracellular portion of the chain corresponds to 192-215 (RYVPEGNMTACGTDYFNRGLLSAS). Residue Asn-198 is glycosylated (N-linked (GlcNAc...) asparagine). A helical transmembrane segment spans residues 216-243 (YLVCYGIWVYFVPLFLIIYSYWFIIQAV). The Cytoplasmic portion of the chain corresponds to 244 to 278 (AAHEKNMREQAKKMNVASLRSSENQNTSAECKLAK). A helical transmembrane segment spans residues 279-302 (VALMTISLWFMAWTPYLVINFSGI). Residues 303–309 (FNLVKIS) are Extracellular-facing. Residues 310-334 (PLFTIWGSLFAKANAVYNPIVYGIS) traverse the membrane as a helical segment. Lys-321 is modified (N6-(retinylidene)lysine). Over 335 to 377 (HPKYRAALFAKFPSLACAAEPSSDAVSTTSGTTTVTDNEKSNA) the chain is Cytoplasmic. The span at 357–370 (SDAVSTTSGTTTVT) shows a compositional bias: low complexity. Positions 357 to 377 (SDAVSTTSGTTTVTDNEKSNA) are disordered.

Belongs to the G-protein coupled receptor 1 family. Opsin subfamily. Phosphorylated on some or all of the serine and threonine residues present in the C-terminal region.

It localises to the membrane. In terms of biological role, visual pigments are the light-absorbing molecules that mediate vision. They consist of an apoprotein, opsin, covalently linked to 11-cis-retinal. The polypeptide is Rhodopsin, long-wavelength (Apis mellifera (Honeybee)).